Reading from the N-terminus, the 245-residue chain is tRNA1(Val) (adenine(37)-N6)-methyltransferase (245 aa).

This sequence belongs to the methyltransferase superfamily. tRNA (adenine-N(6)-)-methyltransferase family.

It localises to the cytoplasm. The catalysed reaction is adenosine(37) in tRNA1(Val) + S-adenosyl-L-methionine = N(6)-methyladenosine(37) in tRNA1(Val) + S-adenosyl-L-homocysteine + H(+). Its function is as follows. Specifically methylates the adenine in position 37 of tRNA(1)(Val) (anticodon cmo5UAC). The protein is tRNA1(Val) (adenine(37)-N6)-methyltransferase of Enterobacter sp. (strain 638).